The primary structure comprises 108 residues: Nucleoid-associated protein Bphyt_1827 (108 aa).

The segment at alanine 87–phenylalanine 108 is disordered. Residues proline 99–phenylalanine 108 are compositionally biased toward pro residues.

This sequence belongs to the YbaB/EbfC family. As to quaternary structure, homodimer.

Its subcellular location is the cytoplasm. The protein localises to the nucleoid. Functionally, binds to DNA and alters its conformation. May be involved in regulation of gene expression, nucleoid organization and DNA protection. In Paraburkholderia phytofirmans (strain DSM 17436 / LMG 22146 / PsJN) (Burkholderia phytofirmans), this protein is Nucleoid-associated protein Bphyt_1827.